Reading from the N-terminus, the 513-residue chain is 2,3-bisphosphoglycerate-independent phosphoglycerate mutase (513 aa).

2 residues coordinate Mn(2+): Asp13 and Ser63. The Phosphoserine intermediate role is filled by Ser63. Substrate-binding positions include His124, 154–155 (RD), Arg186, Arg192, 262–265 (RADR), and Lys335. Mn(2+) contacts are provided by Asp403, His407, Asp444, His445, and His463.

Belongs to the BPG-independent phosphoglycerate mutase family. In terms of assembly, monomer. Requires Mn(2+) as cofactor.

The catalysed reaction is (2R)-2-phosphoglycerate = (2R)-3-phosphoglycerate. The protein operates within carbohydrate degradation; glycolysis; pyruvate from D-glyceraldehyde 3-phosphate: step 3/5. Functionally, catalyzes the interconversion of 2-phosphoglycerate and 3-phosphoglycerate. This Myxococcus xanthus (strain DK1622) protein is 2,3-bisphosphoglycerate-independent phosphoglycerate mutase.